A 317-amino-acid polypeptide reads, in one-letter code: Adenine deaminase (317 aa).

Residues His14, His16, and His194 each contribute to the Zn(2+) site. Glu197 functions as the Proton donor in the catalytic mechanism. Residue Asp275 coordinates Zn(2+). Asp276 lines the substrate pocket.

This sequence belongs to the metallo-dependent hydrolases superfamily. Adenosine and AMP deaminases family. Adenine deaminase type 2 subfamily. It depends on Zn(2+) as a cofactor.

The catalysed reaction is adenine + H2O + H(+) = hypoxanthine + NH4(+). Catalyzes the hydrolytic deamination of adenine to hypoxanthine. Plays an important role in the purine salvage pathway and in nitrogen catabolism. The chain is Adenine deaminase from Pseudomonas syringae pv. tomato (strain ATCC BAA-871 / DC3000).